We begin with the raw amino-acid sequence, 122 residues long: Urocortin (122 aa).

The signal sequence occupies residues 1 to 25 (MIQRGRATLLVALLLLAQLRPESSQ). The propeptide occupies 26–80 (WSPAAAAATGVQDPNLRWSPGVRNQGGGVRALLLLLAERFPRRAGSEPAGERQRR). V120 bears the Valine amide mark.

Belongs to the sauvagine/corticotropin-releasing factor/urotensin I family. In terms of assembly, interacts with CRHR1 and CRHR2 (via their N-terminal extracellular domain). As to expression, in the organ of Corti, detected in the inner hair cell region (at protein level). Expressed in skin (at protein level).

It is found in the secreted. Functionally, acts in vitro to stimulate the secretion of adrenocorticotropic hormone (ACTH). Binds with high affinity to CRF receptor types 1, 2-alpha, and 2-beta. Plays a role in the establishment of normal hearing thresholds. Reduces food intake and regulates ghrelin levels in gastric body and plasma. The polypeptide is Urocortin (Ucn) (Mus musculus (Mouse)).